We begin with the raw amino-acid sequence, 31 residues long: Alcohol dehydrogenase 1 (31 aa).

Cysteine 7 serves as a coordination point for Zn(2+).

This sequence belongs to the zinc-containing alcohol dehydrogenase family. Class-P subfamily. In terms of assembly, homodimer. The cofactor is Zn(2+).

It localises to the cytoplasm. The enzyme catalyses a primary alcohol + NAD(+) = an aldehyde + NADH + H(+). It catalyses the reaction a secondary alcohol + NAD(+) = a ketone + NADH + H(+). In Catharanthus roseus (Madagascar periwinkle), this protein is Alcohol dehydrogenase 1.